The chain runs to 607 residues: UvrABC system protein C (607 aa).

The GIY-YIG domain maps to 15–92 (SQPGSYQMKD…IKRYRPYFNI (78 aa)). The region spanning 197–232 (GKAISDIKKKMKRASDSTEYELAADFRDRLKFIDQT) is the UVR domain.

Belongs to the UvrC family. As to quaternary structure, interacts with UvrB in an incision complex.

The protein resides in the cytoplasm. Functionally, the UvrABC repair system catalyzes the recognition and processing of DNA lesions. UvrC both incises the 5' and 3' sides of the lesion. The N-terminal half is responsible for the 3' incision and the C-terminal half is responsible for the 5' incision. This is UvrABC system protein C from Oenococcus oeni (strain ATCC BAA-331 / PSU-1).